We begin with the raw amino-acid sequence, 208 residues long: NAD(P)H-hydrate epimerase (208 aa).

One can recognise a YjeF N-terminal domain in the interval 11–208 (MRAKDQFTIN…VIVADDMGTY (198 aa)). 59-63 (NNGGD) serves as a coordination point for (6S)-NADPHX. Asn60 and Asp122 together coordinate K(+). (6S)-NADPHX contacts are provided by residues 126–132 (GIGIDRP), Tyr137, and Asp155. Ser158 contributes to the K(+) binding site.

Belongs to the NnrE/AIBP family. K(+) serves as cofactor.

It carries out the reaction (6R)-NADHX = (6S)-NADHX. It catalyses the reaction (6R)-NADPHX = (6S)-NADPHX. Catalyzes the epimerization of the S- and R-forms of NAD(P)HX, a damaged form of NAD(P)H that is a result of enzymatic or heat-dependent hydration. This is a prerequisite for the S-specific NAD(P)H-hydrate dehydratase to allow the repair of both epimers of NAD(P)HX. This Limosilactobacillus fermentum (strain NBRC 3956 / LMG 18251) (Lactobacillus fermentum) protein is NAD(P)H-hydrate epimerase.